Consider the following 207-residue polypeptide: LexA repressor (207 aa).

Positions 28-48 (RAEIARELGFRSANAAEEHLK) form a DNA-binding region, H-T-H motif. Active-site for autocatalytic cleavage activity residues include S124 and K161.

It belongs to the peptidase S24 family. Homodimer.

The catalysed reaction is Hydrolysis of Ala-|-Gly bond in repressor LexA.. Functionally, represses a number of genes involved in the response to DNA damage (SOS response), including recA and lexA. In the presence of single-stranded DNA, RecA interacts with LexA causing an autocatalytic cleavage which disrupts the DNA-binding part of LexA, leading to derepression of the SOS regulon and eventually DNA repair. This is LexA repressor from Aliivibrio salmonicida (strain LFI1238) (Vibrio salmonicida (strain LFI1238)).